Here is a 420-residue protein sequence, read N- to C-terminus: 4-hydroxy-3-methylbut-2-en-1-yl diphosphate synthase (flavodoxin) (420 aa).

Positions 307, 310, 353, and 360 each coordinate [4Fe-4S] cluster.

This sequence belongs to the IspG family. Requires [4Fe-4S] cluster as cofactor.

It catalyses the reaction (2E)-4-hydroxy-3-methylbut-2-enyl diphosphate + oxidized [flavodoxin] + H2O + 2 H(+) = 2-C-methyl-D-erythritol 2,4-cyclic diphosphate + reduced [flavodoxin]. The protein operates within isoprenoid biosynthesis; isopentenyl diphosphate biosynthesis via DXP pathway; isopentenyl diphosphate from 1-deoxy-D-xylulose 5-phosphate: step 5/6. In terms of biological role, converts 2C-methyl-D-erythritol 2,4-cyclodiphosphate (ME-2,4cPP) into 1-hydroxy-2-methyl-2-(E)-butenyl 4-diphosphate. This Brucella suis (strain ATCC 23445 / NCTC 10510) protein is 4-hydroxy-3-methylbut-2-en-1-yl diphosphate synthase (flavodoxin).